Here is a 187-residue protein sequence, read N- to C-terminus: Elongation factor P (187 aa).

This sequence belongs to the elongation factor P family.

Its subcellular location is the cytoplasm. It participates in protein biosynthesis; polypeptide chain elongation. Its function is as follows. Involved in peptide bond synthesis. Stimulates efficient translation and peptide-bond synthesis on native or reconstituted 70S ribosomes in vitro. Probably functions indirectly by altering the affinity of the ribosome for aminoacyl-tRNA, thus increasing their reactivity as acceptors for peptidyl transferase. The polypeptide is Elongation factor P (Helicobacter pylori (strain G27)).